The sequence spans 132 residues: D-ribose pyranase (132 aa).

The active-site Proton donor is the His20. Substrate is bound by residues Asp28, His99, and 121 to 123; that span reads YSN.

This sequence belongs to the RbsD / FucU family. RbsD subfamily. In terms of assembly, homodecamer.

It localises to the cytoplasm. The catalysed reaction is beta-D-ribopyranose = beta-D-ribofuranose. The protein operates within carbohydrate metabolism; D-ribose degradation; D-ribose 5-phosphate from beta-D-ribopyranose: step 1/2. In terms of biological role, catalyzes the interconversion of beta-pyran and beta-furan forms of D-ribose. This chain is D-ribose pyranase, found in Streptococcus agalactiae serotype V (strain ATCC BAA-611 / 2603 V/R).